The following is a 273-amino-acid chain: Urease accessory protein UreD (273 aa).

This sequence belongs to the UreD family. As to quaternary structure, ureD, UreF and UreG form a complex that acts as a GTP-hydrolysis-dependent molecular chaperone, activating the urease apoprotein by helping to assemble the nickel containing metallocenter of UreC. The UreE protein probably delivers the nickel.

It localises to the cytoplasm. Its function is as follows. Required for maturation of urease via the functional incorporation of the urease nickel metallocenter. The polypeptide is Urease accessory protein UreD (Rhizobium leguminosarum bv. trifolii (strain WSM2304)).